We begin with the raw amino-acid sequence, 343 residues long: S-adenosylmethionine:tRNA ribosyltransferase-isomerase (343 aa).

This sequence belongs to the QueA family. Monomer.

Its subcellular location is the cytoplasm. It carries out the reaction 7-aminomethyl-7-carbaguanosine(34) in tRNA + S-adenosyl-L-methionine = epoxyqueuosine(34) in tRNA + adenine + L-methionine + 2 H(+). The protein operates within tRNA modification; tRNA-queuosine biosynthesis. Functionally, transfers and isomerizes the ribose moiety from AdoMet to the 7-aminomethyl group of 7-deazaguanine (preQ1-tRNA) to give epoxyqueuosine (oQ-tRNA). The polypeptide is S-adenosylmethionine:tRNA ribosyltransferase-isomerase (Natranaerobius thermophilus (strain ATCC BAA-1301 / DSM 18059 / JW/NM-WN-LF)).